Reading from the N-terminus, the 511-residue chain is UDP-N-acetylmuramoyl-L-alanyl-D-glutamate--2,6-diaminopimelate ligase (511 aa).

S30 contributes to the UDP-N-acetyl-alpha-D-muramoyl-L-alanyl-D-glutamate binding site. 110 to 116 (GTNGKTT) is an ATP binding site. UDP-N-acetyl-alpha-D-muramoyl-L-alanyl-D-glutamate-binding positions include 152-153 (TT), S179, Q185, and R187. Position 219 is an N6-carboxylysine (K219). Residues R385, 409–412 (DNPR), G476, and E480 contribute to the meso-2,6-diaminopimelate site. Positions 409 to 412 (DNPR) match the Meso-diaminopimelate recognition motif motif.

It belongs to the MurCDEF family. MurE subfamily. Mg(2+) serves as cofactor. Post-translationally, carboxylation is probably crucial for Mg(2+) binding and, consequently, for the gamma-phosphate positioning of ATP.

It localises to the cytoplasm. The enzyme catalyses UDP-N-acetyl-alpha-D-muramoyl-L-alanyl-D-glutamate + meso-2,6-diaminopimelate + ATP = UDP-N-acetyl-alpha-D-muramoyl-L-alanyl-gamma-D-glutamyl-meso-2,6-diaminopimelate + ADP + phosphate + H(+). The protein operates within cell wall biogenesis; peptidoglycan biosynthesis. Functionally, catalyzes the addition of meso-diaminopimelic acid to the nucleotide precursor UDP-N-acetylmuramoyl-L-alanyl-D-glutamate (UMAG) in the biosynthesis of bacterial cell-wall peptidoglycan. This chain is UDP-N-acetylmuramoyl-L-alanyl-D-glutamate--2,6-diaminopimelate ligase, found in Geobacter metallireducens (strain ATCC 53774 / DSM 7210 / GS-15).